Reading from the N-terminus, the 1943-residue chain is Sickle tail protein homolog (1943 aa).

2 disordered regions span residues 1-79 (MEEN…KEIL) and 112-177 (QERL…RSTN). A compositionally biased stretch (basic and acidic residues) spans 38-47 (AECRRTKERL). The span at 48 to 62 (SNGNSRGSVSKSSRN) shows a compositional bias: polar residues. Position 169 is a phosphoserine (S169). Position 244 is a phosphotyrosine (Y244). Positions 290 to 331 (ARGDGPGAPRPGSTAHPPHAIPNSPPSTPVPHSMPPSPSRIP) are disordered. Over residues 308–328 (HAIPNSPPSTPVPHSMPPSPS) the composition is skewed to pro residues. A glycan (O-linked (GlcNAc) serine) is linked at S357. Phosphoserine is present on residues S361 and S365. The residue at position 393 (Y393) is a Phosphotyrosine. The tract at residues 456–476 (RKYPDSHLPTLGSKTPPASPH) is disordered. A Phosphothreonine modification is found at T470. A phosphoserine mark is found at S474 and S526. 2 coiled-coil regions span residues 557 to 581 (RETR…QSAL) and 644 to 685 (MSLL…ELEI). A Phosphoserine modification is found at S809. The interval 848–874 (VLKSQEEAAHTSGQPFHSTGAPGDAKS) is disordered. Residues 957-985 (SAKNRAVSIEKAEKKWEEKRQNLDHYNGK) are a coiled coil. Disordered regions lie at residues 1003–1230 (PNLE…SDAS), 1305–1329 (KTKE…TESS), and 1352–1377 (PKEA…TEEN). Phosphoserine occurs at positions 1027, 1030, 1033, and 1044. Over residues 1044-1053 (SPPPPPPPPR) the composition is skewed to pro residues. 3 stretches are compositionally biased toward basic and acidic residues: residues 1155 to 1167 (EPSR…KDTR), 1174 to 1192 (PKEK…KSDV), and 1305 to 1318 (KTKE…DKCH). Residues 1368–1377 (SSSSSPTEEN) show a composition bias toward polar residues. Residue S1461 is modified to Phosphoserine. A coiled-coil region spans residues 1464–1490 (FEECDEELERMMMEEKIEEEEEEENGD). 3 disordered regions span residues 1481 to 1572 (EEEE…PKKK), 1606 to 1660 (EEEE…EIRK), and 1677 to 1943 (ENTI…KETS). Composition is skewed to polar residues over residues 1491-1501 (SVVQNNNTSQM) and 1512-1533 (RTGQ…TRNP). 2 stretches are compositionally biased toward basic and acidic residues: residues 1539-1548 (NRTELNKFSH) and 1612-1625 (GTLK…RFEI). The span at 1643–1653 (QPSIESTSPIS) shows a compositional bias: polar residues. A coiled-coil region spans residues 1656–1686 (DEIRKNTYRTLDSLEQTIKQLENTISEMSPK). Composition is skewed to polar residues over residues 1691 to 1706 (TSCS…SSHI) and 1731 to 1747 (IPSA…QTSR). Residue S1739 is modified to Phosphoserine. A compositionally biased stretch (basic and acidic residues) spans 1763-1775 (KPGKQSKLQDPRQ). The span at 1806 to 1825 (SPSSGKSSSLPSSSGDSSNL) shows a compositional bias: low complexity. Composition is skewed to polar residues over residues 1834-1843 (SIASNPLSPQ) and 1853-1869 (LIPS…SLTH). S1841 bears the Phosphoserine mark. A compositionally biased stretch (low complexity) spans 1892-1905 (SFSSSPPSPASSVS). 3 positions are modified to phosphoserine: S1896, S1899, and S1902. Residues 1906–1943 (LNQGAKGTRTIHTPSLTSYKAQNGSSSKATPSTAKETS) show a composition bias toward polar residues.

In terms of assembly, interacts with CPNE4 (via VWFA domain).

The protein resides in the cytoplasm. The protein localises to the cytoskeleton. Its subcellular location is the microtubule organizing center. It is found in the centrosome. Required for normal development of intervertebral disks. The polypeptide is Sickle tail protein homolog (KIAA1217) (Homo sapiens (Human)).